Consider the following 290-residue polypeptide: Acetyl-coenzyme A carboxylase carboxyl transferase subunit beta (290 aa).

Residues 28–290 (IMTKCPKCKK…TGGEYEWLQD (263 aa)) enclose the CoA carboxyltransferase N-terminal domain. Cys32, Cys35, Cys51, and Cys54 together coordinate Zn(2+). The C4-type zinc-finger motif lies at 32 to 54 (CPKCKKIMLTKELDKNLRVCMNC).

Belongs to the AccD/PCCB family. As to quaternary structure, acetyl-CoA carboxylase is a heterohexamer composed of biotin carboxyl carrier protein (AccB), biotin carboxylase (AccC) and two subunits each of ACCase subunit alpha (AccA) and ACCase subunit beta (AccD). Zn(2+) serves as cofactor.

The protein resides in the cytoplasm. It carries out the reaction N(6)-carboxybiotinyl-L-lysyl-[protein] + acetyl-CoA = N(6)-biotinyl-L-lysyl-[protein] + malonyl-CoA. It functions in the pathway lipid metabolism; malonyl-CoA biosynthesis; malonyl-CoA from acetyl-CoA: step 1/1. Its function is as follows. Component of the acetyl coenzyme A carboxylase (ACC) complex. Biotin carboxylase (BC) catalyzes the carboxylation of biotin on its carrier protein (BCCP) and then the CO(2) group is transferred by the transcarboxylase to acetyl-CoA to form malonyl-CoA. The chain is Acetyl-coenzyme A carboxylase carboxyl transferase subunit beta from Bacillus velezensis (strain DSM 23117 / BGSC 10A6 / LMG 26770 / FZB42) (Bacillus amyloliquefaciens subsp. plantarum).